Here is a 292-residue protein sequence, read N- to C-terminus: Polyamine aminopropyltransferase 1 (292 aa).

The PABS domain occupies 1–244; sequence MELGMFRLNI…YVNSFVFASD (244 aa). Glutamine 35 is a binding site for S-methyl-5'-thioadenosine. Positions 66 and 90 each coordinate spermidine. Residues aspartate 110 and 142 to 143 each bind S-methyl-5'-thioadenosine; that span reads DG. Aspartate 163 serves as the catalytic Proton acceptor.

The protein belongs to the spermidine/spermine synthase family. Homodimer or homotetramer.

It is found in the cytoplasm. The catalysed reaction is norspermine + S-adenosyl 3-(methylsulfanyl)propylamine = caldopentamine + S-methyl-5'-thioadenosine + 2 H(+). The enzyme catalyses norspermidine + S-adenosyl 3-(methylsulfanyl)propylamine = norspermine + S-methyl-5'-thioadenosine + H(+). It catalyses the reaction S-adenosyl 3-(methylsulfanyl)propylamine + spermidine = thermospermine + S-methyl-5'-thioadenosine + H(+). Functionally, involved in the biosynthesis of polyamines which are thought to support the growth of thermophilic microorganisms under high-temperature conditions. It seems that long-chain and branched-chain of polyamines effectively stabilize DNA and RNA, respectively. Catalyzes the irreversible transfer of a propylamine group from the amino donor S-adenosylmethioninamine (decarboxy-AdoMet) to norspermidine, spermidine and norspermine to yield norspermine, thermospermine and caldopentamine, respectively. It can also synthesize sym-norspermidine (bis(3-aminopropyl)amine) from 1,3-diaminopropane with a very low activity. The biosynthesis of caldohexamine and caldoheptamine from caldopentamine has been also observed. In Hyperthermus butylicus (strain DSM 5456 / JCM 9403 / PLM1-5), this protein is Polyamine aminopropyltransferase 1.